Here is a 381-residue protein sequence, read N- to C-terminus: L-lactate dehydrogenase (381 aa).

The 380-residue stretch at 1-380 folds into the FMN hydroxy acid dehydrogenase domain; the sequence is MIISASTDYR…NRDSLAVSER (380 aa). Substrate is bound at residue Tyr-24. The FMN site is built by Ser-106 and Gln-127. Tyr-129 lines the substrate pocket. Thr-155 provides a ligand contact to FMN. Substrate is bound at residue Arg-164. Lys-251 provides a ligand contact to FMN. His-275 functions as the Proton acceptor in the catalytic mechanism. Arg-278 lines the substrate pocket. Position 306 to 330 (306 to 330) interacts with FMN; the sequence is DSGIRTGLDVVRMIALGADSVLLGR.

This sequence belongs to the FMN-dependent alpha-hydroxy acid dehydrogenase family. Requires FMN as cofactor.

The protein resides in the cell inner membrane. It carries out the reaction (S)-lactate + A = pyruvate + AH2. In terms of biological role, catalyzes the conversion of L-lactate to pyruvate. Is coupled to the respiratory chain. The chain is L-lactate dehydrogenase from Yersinia pseudotuberculosis serotype O:1b (strain IP 31758).